The following is a 649-amino-acid chain: Arylsulfatase (649 aa).

Residues 1-22 (MLQRLVVALCLLGFAALTAAAA) form the signal peptide. Residues D34 and D35 each coordinate Ca(2+). N-linked (GlcNAc...) asparagine glycosylation is present at N41. C72 contacts Ca(2+). C72 serves as the catalytic Nucleophile. C72 is modified (3-oxoalanine (Cys)). Residues N89, N224, and N279 are each glycosylated (N-linked (GlcNAc...) asparagine). D324 and N325 together coordinate Ca(2+). N-linked (GlcNAc...) asparagine glycosylation is found at N445, N489, and N531.

Belongs to the sulfatase family. Ca(2+) is required as a cofactor. Post-translationally, the conversion to 3-oxoalanine (also known as C-formylglycine, FGly), of a serine or cysteine residue in prokaryotes and of a cysteine residue in eukaryotes, is critical for catalytic activity.

The protein localises to the periplasm. The enzyme catalyses an aryl sulfate + H2O = a phenol + sulfate + H(+). With respect to regulation, inhibited by Na(3)BO(3) and KCN. No inhibition by sodium dodecyl sulfate, even at high concentration. Is commonly produced by soil microorganisms and plays an important role in the mineralization of sulfates. The chain is Arylsulfatase from Volvox carteri (Green alga).